A 341-amino-acid chain; its full sequence is Basic membrane protein B (341 aa).

Residues 1–14 (MRIVIFIFGILLTS) form the signal peptide. The N-palmitoyl cysteine moiety is linked to residue cysteine 15. A lipid anchor (S-diacylglycerol cysteine) is attached at cysteine 15.

It belongs to the BMP lipoprotein family. As to quaternary structure, monomer.

Its subcellular location is the cell inner membrane. Its function is as follows. May be part of an ABC-type nucleoside uptake system involved in the purine salvage pathway. This Borreliella burgdorferi (strain ATCC 35210 / DSM 4680 / CIP 102532 / B31) (Borrelia burgdorferi) protein is Basic membrane protein B (bmpB).